The chain runs to 236 residues: Small ribosomal subunit protein uS2c (236 aa).

The protein belongs to the universal ribosomal protein uS2 family.

It is found in the plastid. Its subcellular location is the chloroplast. The sequence is that of Small ribosomal subunit protein uS2c (rps2) from Ipomoea purpurea (Common morning glory).